The primary structure comprises 2280 residues: Protein Ycf2 (2280 aa).

Residue 1631–1638 (GSIGTGRS) participates in ATP binding.

Belongs to the Ycf2 family.

The protein localises to the plastid. It localises to the chloroplast stroma. In terms of biological role, probable ATPase of unknown function. Its presence in a non-photosynthetic plant (Epifagus virginiana) and experiments in tobacco indicate that it has an essential function which is probably not related to photosynthesis. The chain is Protein Ycf2 from Nicotiana tomentosiformis (Tobacco).